Here is a 648-residue protein sequence, read N- to C-terminus: MTNPTPRPETPLLDRVCCPADMKALSDAELERLADEVRSEVISVVAETGGHLGSSLGVVELTVALHAVFNTPTDKLVWDVGHQCYPHKILTGRREQMRTLRQKGGLSGFTKRSESAYDPFGAAHSSTSISAALGFAMGRELGQPVGDTIAVIGDGSITAGMAYEALNHAGHLNKRLFVILNDNDMSIAPPVGALARYLVNLSSKAPFATLRAAADGLEASLPGPLRDGARRARQLVTGMPGGGTLFEELGFTYVGPIDGHDMEALLQTLRAARARTTGPVLIHVVTKKGKGYAPAENAPDKYHGVNKFDPVTGEQKKSVANAPNYTKVFGSTLTEEAARDPRIVAITAAMPSGTGVDIMQKRFPNRVFDVGIAEQHAVTFAAGLAGAGMKPFCAIYSSFLQRGYDQIAHDVALQNLPVRFVIDRAGLVGADGATHAGAFDVGFITSLPNMTVMAAADEAELIHMIATAVAFDEGPIAFRFPRGEGVGVEMPERGTVLEPGRGRVVREGTDVAILSFGAHLHEALQAAKLLEAEGVSVTVADARFSRPLDTGLIDQLVRHHAALVTVEQGAMGGFGAHVMHYLANSGGFDGGLALRVMTLPDRFIEQASPEDMYADAGLRAEDIAATARGALARGRVMPLRQTAKPRAV.

Thiamine diphosphate contacts are provided by residues H82 and 123-125 (AHS). D154 contacts Mg(2+). Thiamine diphosphate contacts are provided by residues 155-156 (GS), N183, Y292, and E374. Position 183 (N183) interacts with Mg(2+).

Belongs to the transketolase family. DXPS subfamily. As to quaternary structure, homodimer. Mg(2+) serves as cofactor. Requires thiamine diphosphate as cofactor.

It carries out the reaction D-glyceraldehyde 3-phosphate + pyruvate + H(+) = 1-deoxy-D-xylulose 5-phosphate + CO2. Its pathway is metabolic intermediate biosynthesis; 1-deoxy-D-xylulose 5-phosphate biosynthesis; 1-deoxy-D-xylulose 5-phosphate from D-glyceraldehyde 3-phosphate and pyruvate: step 1/1. Functionally, catalyzes the acyloin condensation reaction between C atoms 2 and 3 of pyruvate and glyceraldehyde 3-phosphate to yield 1-deoxy-D-xylulose-5-phosphate (DXP). In Cereibacter sphaeroides (strain ATCC 17023 / DSM 158 / JCM 6121 / CCUG 31486 / LMG 2827 / NBRC 12203 / NCIMB 8253 / ATH 2.4.1.) (Rhodobacter sphaeroides), this protein is 1-deoxy-D-xylulose-5-phosphate synthase 1.